A 461-amino-acid polypeptide reads, in one-letter code: Probable Xaa-Pro aminopeptidase PEPP (461 aa).

The Mn(2+) site is built by Asp-257, Asp-268, Glu-391, and Glu-431.

Belongs to the peptidase M24B family. Mn(2+) is required as a cofactor.

The enzyme catalyses Release of any N-terminal amino acid, including proline, that is linked to proline, even from a dipeptide or tripeptide.. Functionally, catalyzes the removal of a penultimate prolyl residue from the N-termini of peptides. The protein is Probable Xaa-Pro aminopeptidase PEPP (PEPP) of Colletotrichum graminicola (strain M1.001 / M2 / FGSC 10212) (Maize anthracnose fungus).